The primary structure comprises 268 residues: MNSEDAALDLLRRLNPKDISKNLDTILSVAPDLADVLLSSVDQPLKVNTCSESGNQYLLCDFNRDGDSYRSPWSNKYDPPLEDGLVSTDRVRKLEVSLNEAIRVYLDLYYEGGVSSVYLWDQDDSYAGAVLIKKASTSNSSGWDSIHVFECLPTTETNVYDYRLTSTIILFLSSGSEEQSALPSKALNLSGHLTRQTSQRLPAADDDTEIANVGKLVEEMETRMRNFLQDVYFGKTKDIINQTRSIQPVSDAQPNDSALRSVLNDLSI.

The protein belongs to the F-actin-capping protein beta subunit family. Component of the F-actin capping complex, composed of a heterodimer of an alpha and a beta subunit.

The protein resides in the cytoplasm. It is found in the cytoskeleton. Its subcellular location is the actin patch. The protein localises to the nucleus. Functionally, F-actin-capping proteins bind in a Ca(2+)-independent manner to the fast growing ends of actin filaments (barbed end) thereby blocking the exchange of subunits at these ends. Unlike other capping proteins (such as gelsolin and severin), these proteins do not sever actin filaments. Competes with formin cdc12 for attachment to the actin filaments barbed ends. Slowly replaces cdc12 on the barbed ends in preparation for filament disassembly during contractile ring constriction. This chain is F-actin-capping protein subunit beta (acp2), found in Schizosaccharomyces pombe (strain 972 / ATCC 24843) (Fission yeast).